The chain runs to 90 residues: Protein RL8A (90 aa).

A helical transmembrane segment spans residues 15–34 (WTCEGLLLLLGLLVLFFHHH). Positions 55–90 (HESGWYSSDDDGDRDGDEETGESHNRNSVGLSAVFS) are disordered. Residues 62–74 (SDDDGDRDGDEET) are compositionally biased toward acidic residues. Polar residues predominate over residues 80-90 (RNSVGLSAVFS).

It is found in the host membrane. The polypeptide is Protein RL8A (RL8A) (Homo sapiens (Human)).